Reading from the N-terminus, the 362-residue chain is Peptide chain release factor 2 (362 aa).

N5-methylglutamine is present on glutamine 250.

This sequence belongs to the prokaryotic/mitochondrial release factor family. Post-translationally, methylated by PrmC. Methylation increases the termination efficiency of RF2.

It localises to the cytoplasm. Functionally, peptide chain release factor 2 directs the termination of translation in response to the peptide chain termination codons UGA and UAA. This chain is Peptide chain release factor 2, found in Clostridium perfringens (strain ATCC 13124 / DSM 756 / JCM 1290 / NCIMB 6125 / NCTC 8237 / Type A).